The primary structure comprises 1443 residues: Cleavage and polyadenylation specificity factor subunit 1 (1443 aa).

Disordered regions lie at residues 404 to 435 (PASAVREAADKEEPPSKKKRVDATAGWSAAGK), 546 to 570 (EEDNPKGEGTEQEPSTTPEADDDGR), 715 to 777 (GGAR…PAPF), and 901 to 921 (FREKKPKPSKKKAEGGGAEEG). The span at 410–419 (EAADKEEPPS) shows a compositional bias: basic and acidic residues. Phosphoserine is present on residues Ser756 and Ser766. Basic and acidic residues predominate over residues 758–775 (SKEEARRSSQPPADRDPA). Residues 893 to 908 (KKVPHNINFREKKPKP) carry the Nuclear localization signal motif.

Belongs to the CPSF1 family. In terms of assembly, component of the cleavage and polyadenylation specificity factor (CPSF) complex, composed of CPSF1, CPSF2, CPSF3, CPSF4 and FIP1L1. Found in a complex with CPSF1, FIP1L1 and PAPOLA. Interacts with FIP1L1, TENT2/GLD2 and SRRM1. Interacts with TUT1; the interaction is direct and mediates the recruitment of the CPSF complex on the 3'UTR of selected pre-mRNAs. In terms of processing, the N-terminus is blocked. Widely expressed, with high expression in the retina.

The protein resides in the nucleus. Its subcellular location is the nucleoplasm. Functionally, component of the cleavage and polyadenylation specificity factor (CPSF) complex that plays a key role in pre-mRNA 3'-end formation, recognizing the AAUAAA signal sequence and interacting with poly(A) polymerase and other factors to bring about cleavage and poly(A) addition. This subunit is involved in the RNA recognition step of the polyadenylation reaction. May play a role in eye morphogenesis and the development of retinal ganglion cell projections to the midbrain. The chain is Cleavage and polyadenylation specificity factor subunit 1 (CPSF1) from Homo sapiens (Human).